Reading from the N-terminus, the 195-residue chain is dTTP/UTP pyrophosphatase (195 aa).

D73 (proton acceptor) is an active-site residue.

The protein belongs to the Maf family. YhdE subfamily. The cofactor is a divalent metal cation.

It localises to the cytoplasm. The catalysed reaction is dTTP + H2O = dTMP + diphosphate + H(+). The enzyme catalyses UTP + H2O = UMP + diphosphate + H(+). Functionally, nucleoside triphosphate pyrophosphatase that hydrolyzes dTTP and UTP. May have a dual role in cell division arrest and in preventing the incorporation of modified nucleotides into cellular nucleic acids. The polypeptide is dTTP/UTP pyrophosphatase (Exiguobacterium sibiricum (strain DSM 17290 / CCUG 55495 / CIP 109462 / JCM 13490 / 255-15)).